The chain runs to 244 residues: 6-carboxyhexanoate--CoA ligase (244 aa).

It belongs to the BioW family. Homodimer. Mg(2+) serves as cofactor.

It carries out the reaction heptanedioate + ATP + CoA = 6-carboxyhexanoyl-CoA + AMP + diphosphate. The protein operates within metabolic intermediate metabolism; pimeloyl-CoA biosynthesis; pimeloyl-CoA from pimelate: step 1/1. In terms of biological role, catalyzes the transformation of pimelate into pimeloyl-CoA with concomitant hydrolysis of ATP to AMP. The protein is 6-carboxyhexanoate--CoA ligase of Methanococcus maripaludis (strain C6 / ATCC BAA-1332).